The chain runs to 361 residues: Protein RecA (361 aa).

Residue 77 to 84 participates in ATP binding; that stretch reads GPESSGKT.

It belongs to the RecA family.

The protein resides in the cytoplasm. Functionally, can catalyze the hydrolysis of ATP in the presence of single-stranded DNA, the ATP-dependent uptake of single-stranded DNA by duplex DNA, and the ATP-dependent hybridization of homologous single-stranded DNAs. It interacts with LexA causing its activation and leading to its autocatalytic cleavage. This chain is Protein RecA, found in Sinorhizobium fredii (strain NBRC 101917 / NGR234).